The primary structure comprises 112 residues: Probable 4-amino-4-deoxy-L-arabinose-phosphoundecaprenol flippase subunit ArnE (112 aa).

Positions 35 to 110 (RHILFWLGMA…IVVGIVILGT (76 aa)) constitute an EamA domain. 3 helical membrane passes run 37–57 (ILFWLGMALLCLGCGMLLWLS), 66–86 (IAYPMLSLNFVWVTLAGWGIW), and 89–109 (PVARRHWLGVGLIVVGIVILG).

The protein belongs to the ArnE family. Heterodimer of ArnE and ArnF.

Its subcellular location is the cell inner membrane. It participates in bacterial outer membrane biogenesis; lipopolysaccharide biosynthesis. Translocates 4-amino-4-deoxy-L-arabinose-phosphoundecaprenol (alpha-L-Ara4N-phosphoundecaprenol) from the cytoplasmic to the periplasmic side of the inner membrane. This is Probable 4-amino-4-deoxy-L-arabinose-phosphoundecaprenol flippase subunit ArnE from Klebsiella pneumoniae (strain 342).